Consider the following 643-residue polypeptide: Replication protein E1 (643 aa).

Residues 86–88 carry the Nuclear localization signal motif; sequence KRK. The Nuclear export signal signature appears at 109-118; that stretch reads LSPRLQEISL. Ser110 is subject to Phosphoserine; by host. The span at 152–175 shows a compositional bias: polar residues; that stretch reads NTNAENGGSVHSTQSSGGDSSDNA. The segment at 152–178 is disordered; it reads NTNAENGGSVHSTQSSGGDSSDNAENV. Positions 179-345 are DNA-binding region; that stretch reads DPHCSITELK…LTIIQHGIDD (167 aa). The 151-residue stretch at 444 to 594 folds into the SF3 helicase domain; sequence VEFISFLRAL…FPFDKNGNPV (151 aa). 470–477 provides a ligand contact to ATP; sequence GPANTGKS. Lys551 participates in a covalent cross-link: Glycyl lysine isopeptide (Lys-Gly) (interchain with G-Cter in SUMO).

It belongs to the papillomaviridae E1 protein family. Can form hexamers. Interacts with E2 protein; this interaction increases E1 DNA binding specificity. Interacts with host DNA polymerase subunit POLA2. Interacts with host single stranded DNA-binding protein RPA1. Interacts with host TOP1; this interaction stimulates the enzymatic activity of TOP1. Phosphorylated. In terms of processing, sumoylated.

It localises to the host nucleus. It carries out the reaction Couples ATP hydrolysis with the unwinding of duplex DNA by translocating in the 3'-5' direction.. It catalyses the reaction ATP + H2O = ADP + phosphate + H(+). Functionally, ATP-dependent DNA 3'-5' helicase required for initiation of viral DNA replication. It forms a complex with the viral E2 protein. The E1-E2 complex binds to the replication origin which contains binding sites for both proteins. During the initial step, a dimer of E1 interacts with a dimer of protein E2 leading to a complex that binds the viral origin of replication with high specificity. Then, a second dimer of E1 displaces the E2 dimer in an ATP-dependent manner to form the E1 tetramer. Following this, two E1 monomers are added to each half of the site, which results in the formation of two E1 trimers on the viral ori. Subsequently, two hexamers will be created. The double hexamer acts as a bi-directional helicase machinery and unwinds the viral DNA and then recruits the host DNA polymerase to start replication. The sequence is that of Replication protein E1 from Human papillomavirus 45.